Consider the following 270-residue polypeptide: Putative phosphoenolpyruvate synthase regulatory protein (270 aa).

Residue 150 to 157 (GVSRCGKT) participates in ADP binding.

It belongs to the pyruvate, phosphate/water dikinase regulatory protein family. PSRP subfamily.

The enzyme catalyses [pyruvate, water dikinase] + ADP = [pyruvate, water dikinase]-phosphate + AMP + H(+). It catalyses the reaction [pyruvate, water dikinase]-phosphate + phosphate + H(+) = [pyruvate, water dikinase] + diphosphate. Functionally, bifunctional serine/threonine kinase and phosphorylase involved in the regulation of the phosphoenolpyruvate synthase (PEPS) by catalyzing its phosphorylation/dephosphorylation. This chain is Putative phosphoenolpyruvate synthase regulatory protein, found in Shewanella frigidimarina (strain NCIMB 400).